A 637-amino-acid polypeptide reads, in one-letter code: 1-deoxy-D-xylulose-5-phosphate synthase (637 aa).

Thiamine diphosphate-binding positions include H88 and 129–131; that span reads GHS. Residue D160 coordinates Mg(2+). Thiamine diphosphate is bound by residues 161–162, N189, F293, and E370; that span reads GA. Residue N189 coordinates Mg(2+).

The protein belongs to the transketolase family. DXPS subfamily. Homodimer. Mg(2+) is required as a cofactor. The cofactor is thiamine diphosphate.

The catalysed reaction is D-glyceraldehyde 3-phosphate + pyruvate + H(+) = 1-deoxy-D-xylulose 5-phosphate + CO2. Its pathway is metabolic intermediate biosynthesis; 1-deoxy-D-xylulose 5-phosphate biosynthesis; 1-deoxy-D-xylulose 5-phosphate from D-glyceraldehyde 3-phosphate and pyruvate: step 1/1. Its function is as follows. Catalyzes the acyloin condensation reaction between C atoms 2 and 3 of pyruvate and glyceraldehyde 3-phosphate to yield 1-deoxy-D-xylulose-5-phosphate (DXP). The sequence is that of 1-deoxy-D-xylulose-5-phosphate synthase from Acinetobacter baumannii (strain AYE).